Reading from the N-terminus, the 204-residue chain is Holliday junction branch migration complex subunit RuvA (204 aa).

The segment at 1–64 (MIGRLQGILL…EDAHLLFGFS (64 aa)) is domain I. A domain II region spans residues 65–143 (AKTDRTLFRE…GIKQPDFFVE (79 aa)). A flexible linker region spans residues 144-155 (SSHVGAVDPVTT). Residues 156-204 (SPEVPAEEAVAALMALGYKASDAEKMVKRIAKPHLTSEQLIREALKAAL) are domain III.

The protein belongs to the RuvA family. As to quaternary structure, homotetramer. Forms an RuvA(8)-RuvB(12)-Holliday junction (HJ) complex. HJ DNA is sandwiched between 2 RuvA tetramers; dsDNA enters through RuvA and exits via RuvB. An RuvB hexamer assembles on each DNA strand where it exits the tetramer. Each RuvB hexamer is contacted by two RuvA subunits (via domain III) on 2 adjacent RuvB subunits; this complex drives branch migration. In the full resolvosome a probable DNA-RuvA(4)-RuvB(12)-RuvC(2) complex forms which resolves the HJ.

Its subcellular location is the cytoplasm. Its function is as follows. The RuvA-RuvB-RuvC complex processes Holliday junction (HJ) DNA during genetic recombination and DNA repair, while the RuvA-RuvB complex plays an important role in the rescue of blocked DNA replication forks via replication fork reversal (RFR). RuvA specifically binds to HJ cruciform DNA, conferring on it an open structure. The RuvB hexamer acts as an ATP-dependent pump, pulling dsDNA into and through the RuvAB complex. HJ branch migration allows RuvC to scan DNA until it finds its consensus sequence, where it cleaves and resolves the cruciform DNA. The polypeptide is Holliday junction branch migration complex subunit RuvA (Mannheimia succiniciproducens (strain KCTC 0769BP / MBEL55E)).